The sequence spans 220 residues: Iron-sulfur cluster repair protein YtfE (220 aa).

This sequence belongs to the RIC family. YtfE subfamily. As to quaternary structure, homodimer.

Its subcellular location is the cytoplasm. Di-iron-containing protein involved in the repair of iron-sulfur clusters damaged by oxidative and nitrosative stress conditions. The protein is Iron-sulfur cluster repair protein YtfE of Salmonella paratyphi A (strain AKU_12601).